Here is a 296-residue protein sequence, read N- to C-terminus: Probable endonuclease 4 (296 aa).

Zn(2+) contacts are provided by His-69, His-109, Glu-160, Asp-194, His-197, His-231, Asp-244, His-246, and Glu-276.

It belongs to the AP endonuclease 2 family. Zn(2+) is required as a cofactor.

The enzyme catalyses Endonucleolytic cleavage to 5'-phosphooligonucleotide end-products.. Endonuclease IV plays a role in DNA repair. It cleaves phosphodiester bonds at apurinic or apyrimidinic (AP) sites, generating a 3'-hydroxyl group and a 5'-terminal sugar phosphate. This chain is Probable endonuclease 4, found in Sulfurovum sp. (strain NBC37-1).